Reading from the N-terminus, the 153-residue chain is Aspartate carbamoyltransferase regulatory chain (153 aa).

Residues cysteine 109, cysteine 114, cysteine 138, and cysteine 141 each contribute to the Zn(2+) site.

It belongs to the PyrI family. Contains catalytic and regulatory chains. Requires Zn(2+) as cofactor.

In terms of biological role, involved in allosteric regulation of aspartate carbamoyltransferase. This chain is Aspartate carbamoyltransferase regulatory chain, found in Nitrosopumilus maritimus (strain SCM1).